Reading from the N-terminus, the 145-residue chain is MNLTDYVKEVSRQDFGIEFQHTASWNSRLQTTGGRFFPEDGHLDFNPKFCKKGDAGTFRKIVRHELCHYHLYYAGKGYRHGDKDFKDLLLQVNGVRYAPSIQSNTFYHYYQCESCGQVYQRKRRMNTKKYACGNCHGKLRHQNQS.

Residues 4 to 141 (TDYVKEVSRQ…CGNCHGKLRH (138 aa)) form the SprT-like domain. A Zn(2+)-binding site is contributed by H64. E65 is a catalytic residue. H68 is a binding site for Zn(2+).

Belongs to the SprT family. Requires Zn(2+) as cofactor.

It is found in the cytoplasm. In Streptococcus mutans serotype c (strain ATCC 700610 / UA159), this protein is Protein SprT-like.